An 86-amino-acid chain; its full sequence is Large ribosomal subunit protein bL27 (86 aa).

Residues 1-10 are compositionally biased toward gly residues; it reads MAQKKGGGST. The disordered stretch occupies residues 1–21; sequence MAQKKGGGSTRNGRDSESKRL.

It belongs to the bacterial ribosomal protein bL27 family.

The chain is Large ribosomal subunit protein bL27 from Cupriavidus pinatubonensis (strain JMP 134 / LMG 1197) (Cupriavidus necator (strain JMP 134)).